Here is a 457-residue protein sequence, read N- to C-terminus: NAC domain-containing protein 69 (457 aa).

Residues 4–153 (DLVGYRFYPT…NYVICQVMYK (150 aa)) enclose the NAC domain. The DNA-binding element occupies 107–159 (IGIKKTLVYYEGRVPKGVWTPWVMHEYHITCLPQDQRNYVICQVMYKGEDGDV). 2 disordered regions span residues 158–180 (DVPS…SNTV) and 302–332 (DSNS…SNRQ). Residues 162-180 (GGNNSSEPSQSLVSDSNTV) are compositionally biased toward polar residues. Over residues 302–311 (DSNSDAESIS) the composition is skewed to low complexity. Positions 312–332 (ATSYQGTSSPGDDSVGSSNRQ) are enriched in polar residues. The helical transmembrane segment at 421–441 (IYLMRMIIGFILLLALISNII) threads the bilayer.

The protein localises to the membrane. It is found in the nucleus. In terms of biological role, transcription activator activated by proteolytic cleavage through regulated intramembrane proteolysis (RIP). Involved in salt stress response during seed germination and seedling growth. Binds the auxin-responsive IAA30 gene promoter and may serve as a molecular link that interconnects a developmental feedback loop of auxin signaling with a salt signal transduction pathway during seed germination. The sequence is that of NAC domain-containing protein 69 (NAC69) from Arabidopsis thaliana (Mouse-ear cress).